A 60-amino-acid chain; its full sequence is Large ribosomal subunit protein uL30 (60 aa).

It belongs to the universal ribosomal protein uL30 family. Part of the 50S ribosomal subunit.

The polypeptide is Large ribosomal subunit protein uL30 (Staphylococcus epidermidis (strain ATCC 35984 / DSM 28319 / BCRC 17069 / CCUG 31568 / BM 3577 / RP62A)).